We begin with the raw amino-acid sequence, 133 residues long: Phosphoribosyl-AMP cyclohydrolase (133 aa).

A Mg(2+)-binding site is contributed by aspartate 77. Residue cysteine 78 coordinates Zn(2+). Residues aspartate 79 and aspartate 81 each coordinate Mg(2+). Zn(2+) contacts are provided by cysteine 95 and cysteine 102.

This sequence belongs to the PRA-CH family. As to quaternary structure, homodimer. Mg(2+) serves as cofactor. It depends on Zn(2+) as a cofactor.

Its subcellular location is the cytoplasm. It catalyses the reaction 1-(5-phospho-beta-D-ribosyl)-5'-AMP + H2O = 1-(5-phospho-beta-D-ribosyl)-5-[(5-phospho-beta-D-ribosylamino)methylideneamino]imidazole-4-carboxamide. It functions in the pathway amino-acid biosynthesis; L-histidine biosynthesis; L-histidine from 5-phospho-alpha-D-ribose 1-diphosphate: step 3/9. Functionally, catalyzes the hydrolysis of the adenine ring of phosphoribosyl-AMP. The protein is Phosphoribosyl-AMP cyclohydrolase of Pseudomonas fluorescens (strain Pf0-1).